A 186-amino-acid chain; its full sequence is ATP synthase subunit delta (186 aa).

Belongs to the ATPase delta chain family. In terms of assembly, F-type ATPases have 2 components, F(1) - the catalytic core - and F(0) - the membrane proton channel. F(1) has five subunits: alpha(3), beta(3), gamma(1), delta(1), epsilon(1). F(0) has three main subunits: a(1), b(2) and c(10-14). The alpha and beta chains form an alternating ring which encloses part of the gamma chain. F(1) is attached to F(0) by a central stalk formed by the gamma and epsilon chains, while a peripheral stalk is formed by the delta and b chains.

It is found in the cell inner membrane. Its function is as follows. F(1)F(0) ATP synthase produces ATP from ADP in the presence of a proton or sodium gradient. F-type ATPases consist of two structural domains, F(1) containing the extramembraneous catalytic core and F(0) containing the membrane proton channel, linked together by a central stalk and a peripheral stalk. During catalysis, ATP synthesis in the catalytic domain of F(1) is coupled via a rotary mechanism of the central stalk subunits to proton translocation. This protein is part of the stalk that links CF(0) to CF(1). It either transmits conformational changes from CF(0) to CF(1) or is implicated in proton conduction. The protein is ATP synthase subunit delta of Mesorhizobium japonicum (strain LMG 29417 / CECT 9101 / MAFF 303099) (Mesorhizobium loti (strain MAFF 303099)).